The following is a 109-amino-acid chain: Putative polyketide cyclase (109 aa).

To polyketide cyclases.

Involved in developmentally regulated synthesis of a compound biosynthetically related to polyketide antibiotics which is essential for spore color in Streptomyces halstedii. The chain is Putative polyketide cyclase (sch4) from Streptomyces halstedii.